A 233-amino-acid chain; its full sequence is Antilisterial bacteriocin subtilosin biosynthesis protein AlbG (233 aa).

Helical transmembrane passes span phenylalanine 7–valine 27, glycine 46–valine 66, threonine 116–valine 136, threonine 145–methionine 165, glycine 176–phenylalanine 198, and leucine 203–tyrosine 220.

The protein localises to the cell membrane. Involved in the production of the bacteriocin subtilosin. This chain is Antilisterial bacteriocin subtilosin biosynthesis protein AlbG (albG), found in Bacillus subtilis (strain 168).